The sequence spans 178 residues: ATP-dependent protease subunit HslV (178 aa).

T7 is an active-site residue. Positions 162, 165, and 168 each coordinate Na(+).

This sequence belongs to the peptidase T1B family. HslV subfamily. As to quaternary structure, a double ring-shaped homohexamer of HslV is capped on each side by a ring-shaped HslU homohexamer. The assembly of the HslU/HslV complex is dependent on binding of ATP.

The protein localises to the cytoplasm. It carries out the reaction ATP-dependent cleavage of peptide bonds with broad specificity.. Allosterically activated by HslU binding. Protease subunit of a proteasome-like degradation complex believed to be a general protein degrading machinery. The protein is ATP-dependent protease subunit HslV of Burkholderia ambifaria (strain MC40-6).